A 332-amino-acid polypeptide reads, in one-letter code: Glycerol-3-phosphate dehydrogenase [NAD(P)+] (332 aa).

Residues Ser-14, Trp-15, Arg-35, and Lys-107 each coordinate NADPH. Residues Lys-107, Gly-137, and Ser-139 each coordinate sn-glycerol 3-phosphate. Position 141 (Ala-141) interacts with NADPH. Sn-glycerol 3-phosphate is bound by residues Lys-192, Asp-245, Ser-255, Arg-256, and Asn-257. Lys-192 acts as the Proton acceptor in catalysis. NADPH is bound at residue Arg-256. 2 residues coordinate NADPH: Val-280 and Glu-282.

It belongs to the NAD-dependent glycerol-3-phosphate dehydrogenase family.

It localises to the cytoplasm. It catalyses the reaction sn-glycerol 3-phosphate + NAD(+) = dihydroxyacetone phosphate + NADH + H(+). The enzyme catalyses sn-glycerol 3-phosphate + NADP(+) = dihydroxyacetone phosphate + NADPH + H(+). Its pathway is membrane lipid metabolism; glycerophospholipid metabolism. Its function is as follows. Catalyzes the reduction of the glycolytic intermediate dihydroxyacetone phosphate (DHAP) to sn-glycerol 3-phosphate (G3P), the key precursor for phospholipid synthesis. The sequence is that of Glycerol-3-phosphate dehydrogenase [NAD(P)+] from Desulfovibrio desulfuricans (strain ATCC 27774 / DSM 6949 / MB).